Here is a 179-residue protein sequence, read N- to C-terminus: Replication restart protein DnaT (179 aa).

The tract at residues Asn155–Gly179 is disordered.

This sequence belongs to the DnaT family. As to quaternary structure, homooligomerizes. Interacts with PriB. Component of the replication restart primosome. Primosome assembly occurs via a 'hand-off' mechanism. PriA binds to replication forks, subsequently PriB then DnaT bind; DnaT then displaces ssDNA to generate the helicase loading substrate.

Involved in the restart of stalled replication forks, which reloads the replicative helicase on sites other than the origin of replication. Can function in multiple replication restart pathways. Displaces ssDNA from a PriB-ssDNA complex. Probably forms a spiral filament on ssDNA. The chain is Replication restart protein DnaT from Escherichia coli O8 (strain IAI1).